A 412-amino-acid chain; its full sequence is rRNA methyltransferase 1, mitochondrial (412 aa).

The N-terminal 20 residues, 1–20, are a transit peptide targeting the mitochondrion; sequence MTSLTNAVFKRYLAVTPSAH.

This sequence belongs to the class IV-like SAM-binding methyltransferase superfamily. RNA methyltransferase TrmH family.

Its subcellular location is the mitochondrion. The catalysed reaction is guanosine(2270) in 21S rRNA + S-adenosyl-L-methionine = 2'-O-methylguanosine(2270) in 21S rRNA + S-adenosyl-L-homocysteine + H(+). Functionally, S-adenosyl-L-methionine-dependent 2'-O-ribose methyltransferase that catalyzes the formation of 2'-O-methylguanosine at position 2270 (Gm2270) in the 21S mitochondrial large subunit ribosomal RNA (mtLSU rRNA), a universally conserved modification in the peptidyl transferase domain of the mtLSU rRNA. This modification seems to be important for the normal accumulation of the mitochondrial large ribosomal subunit. This is rRNA methyltransferase 1, mitochondrial from Saccharomyces cerevisiae (strain ATCC 204508 / S288c) (Baker's yeast).